We begin with the raw amino-acid sequence, 145 residues long: Late embryogenesis abundant protein D-11 (145 aa).

Positions 1–18 are enriched in polar residues; that stretch reads MAHFQNQYSAPEVTQTDA. A disordered region spans residues 1–136; the sequence is MAHFQNQYSA…EAPWSPQPLI (136 aa). A compositionally biased stretch (basic residues) spans 47-57; the sequence is GHHHGGHHGLH. The span at 58 to 68 shows a compositional bias: low complexity; that stretch reads RTGSSSSSSSS. The span at 82–96 shows a compositional bias: basic and acidic residues; that stretch reads KERLKEKIPGNKEHQ. The span at 97–107 shows a compositional bias: polar residues; it reads SQATSTTTPGQ.

Belongs to the plant dehydrin family.

Its function is as follows. LEA protein are late embryogenesis abundant in higher plant seed embryos. There are two subsets of LEA proteins (5a, and 5b), the first ones are expressed when the cotyledon weight reach 80 mg and the second set are expressed above 100 mg. The function of those proteins is not known. This Gossypium hirsutum (Upland cotton) protein is Late embryogenesis abundant protein D-11.